A 354-amino-acid polypeptide reads, in one-letter code: Uroporphyrinogen decarboxylase (354 aa).

Residues 27–31 (RQAGR), F46, D77, Y153, T208, and H326 contribute to the substrate site.

It belongs to the uroporphyrinogen decarboxylase family. In terms of assembly, homodimer.

It is found in the cytoplasm. The enzyme catalyses uroporphyrinogen III + 4 H(+) = coproporphyrinogen III + 4 CO2. Its pathway is porphyrin-containing compound metabolism; protoporphyrin-IX biosynthesis; coproporphyrinogen-III from 5-aminolevulinate: step 4/4. Functionally, catalyzes the decarboxylation of four acetate groups of uroporphyrinogen-III to yield coproporphyrinogen-III. This is Uroporphyrinogen decarboxylase from Neisseria meningitidis serogroup B (strain ATCC BAA-335 / MC58).